We begin with the raw amino-acid sequence, 208 residues long: Phosphoheptose isomerase (208 aa).

Positions 38–200 (MALTLARGRK…LFENVLALQP (163 aa)) constitute an SIS domain. 53–55 (NGG) serves as a coordination point for substrate. Zn(2+) contacts are provided by H62 and E66. Residues E66, 95–96 (ND), 121–123 (STS), S126, and Q173 contribute to the substrate site. Positions 173 and 181 each coordinate Zn(2+).

It belongs to the SIS family. GmhA subfamily. In terms of assembly, homotetramer. Zn(2+) is required as a cofactor.

It is found in the cytoplasm. The catalysed reaction is 2 D-sedoheptulose 7-phosphate = D-glycero-alpha-D-manno-heptose 7-phosphate + D-glycero-beta-D-manno-heptose 7-phosphate. The protein operates within carbohydrate biosynthesis; D-glycero-D-manno-heptose 7-phosphate biosynthesis; D-glycero-alpha-D-manno-heptose 7-phosphate and D-glycero-beta-D-manno-heptose 7-phosphate from sedoheptulose 7-phosphate: step 1/1. Its function is as follows. Catalyzes the isomerization of sedoheptulose 7-phosphate in D-glycero-D-manno-heptose 7-phosphate. This chain is Phosphoheptose isomerase, found in Nitratidesulfovibrio vulgaris (strain DSM 19637 / Miyazaki F) (Desulfovibrio vulgaris).